Reading from the N-terminus, the 378-residue chain is Ribosomal RNA large subunit methyltransferase G (378 aa).

Belongs to the methyltransferase superfamily. RlmG family.

The protein localises to the cytoplasm. It catalyses the reaction guanosine(1835) in 23S rRNA + S-adenosyl-L-methionine = N(2)-methylguanosine(1835) in 23S rRNA + S-adenosyl-L-homocysteine + H(+). In terms of biological role, specifically methylates the guanine in position 1835 (m2G1835) of 23S rRNA. The polypeptide is Ribosomal RNA large subunit methyltransferase G (Shewanella baltica (strain OS195)).